A 246-amino-acid polypeptide reads, in one-letter code: Uroporphyrinogen-III synthase (246 aa).

The protein belongs to the uroporphyrinogen-III synthase family. As to quaternary structure, monomer.

The enzyme catalyses hydroxymethylbilane = uroporphyrinogen III + H2O. Its pathway is porphyrin-containing compound metabolism; protoporphyrin-IX biosynthesis; coproporphyrinogen-III from 5-aminolevulinate: step 3/4. Functionally, catalyzes cyclization of the linear tetrapyrrole, hydroxymethylbilane, to the macrocyclic uroporphyrinogen III. The protein is Uroporphyrinogen-III synthase (hemD) of Escherichia coli (strain K12).